The following is a 783-amino-acid chain: Cadherin-5 (783 aa).

Residues Met1–Ala25 form the signal peptide. Residues Val26 to Arg45 constitute a propeptide that is removed on maturation. 5 Cadherin domains span residues Lys44 to Phe149, Thr150 to Phe256, Thr257 to Phe371, Gln372 to Phe478, and Phe478 to Thr585. Topologically, residues Asp46–Gln599 are extracellular. Ca(2+) is bound by residues Glu56 and Glu57. An N-linked (GlcNAc...) asparagine glycan is attached at Asn59. Residues Asp107, Glu109, Asp141, Val142, Asn143, Asp144, and Asn145 each contribute to the Ca(2+) site. N-linked (GlcNAc...) asparagine glycosylation occurs at Asn155. 4 residues coordinate Ca(2+): Asp175, Asp177, His184, and Asp229. Asn361, Asn441, and Asn523 each carry an N-linked (GlcNAc...) asparagine glycan. The chain crosses the membrane as a helical span at residues Ala600–Leu620. The segment at Arg621–Val660 is required for interaction with PALS1. Residues Arg621–Tyr783 lie on the Cytoplasmic side of the membrane.

As to quaternary structure, part of a complex composed of AMOTL2, MAGI1 and CDH5, within the complex AMOTL2 acts as a scaffold protein for the interaction of MAGI1 with CDH5. The complex is required for coupling actin fibers to cell junctions in endothelial cells. Within the complex AMOTL2 (via its N-terminus) interacts with CDH5. Interacts (via cadherin 5 domain) with PTPRB. Interacts with TRPC4. Interacts with KRIT1. Interacts with PARD3. Interacts with RTN4 (isoform B). Interacts with PALS1; the interaction promotes PALS1 localization to cell junctions and is required for CDH5-mediated vascular lumen formation and endothelial cell. Interacts with CTNND1/p120-catenin; the interaction controls CADH5 endocytosis. In terms of processing, phosphorylated on tyrosine residues by KDR/VEGFR-2. Dephosphorylated by PTPRB. O-glycosylated.

Its subcellular location is the cell junction. It localises to the adherens junction. The protein resides in the cell membrane. It is found in the cytoplasm. Its function is as follows. Cadherins are calcium-dependent cell adhesion proteins. They preferentially interact with themselves in a homophilic manner in connecting cells; cadherins may thus contribute to the sorting of heterogeneous cell types. This cadherin may play a important role in endothelial cell biology through control of the cohesion and organization of the intercellular junctions. It associates with alpha-catenin forming a link to the cytoskeleton. Plays a role in coupling actin fibers to cell junctions in endothelial cells, via acting as a cell junctional complex anchor for AMOTL2 and MAGI1. Acts in concert with KRIT1 and PALS1 to establish and maintain correct endothelial cell polarity and vascular lumen. These effects are mediated by recruitment and activation of the Par polarity complex and RAP1B. Required for activation of PRKCZ and for localization of phosphorylated PRKCZ, PARD3, TIAM1 and RAP1B to the cell junction. Associates with CTNND1/p120-catenin to control CADH5 endocytosis. This Bos taurus (Bovine) protein is Cadherin-5.